The following is a 115-amino-acid chain: MEDSLLLSVNISDSLFTFSLKPLFSQYRKHIYFNDCFYSTFNKTKTIIVVILSGKLSDLIDFKSYIEFVLKTNNSYSAILISYYRCIFIISLFHRPLTIHFLTNLTHGCTRSFTK.

This is an uncharacterized protein from Schizosaccharomyces pombe (strain 972 / ATCC 24843) (Fission yeast).